A 794-amino-acid chain; its full sequence is Phenylalanine--tRNA ligase beta subunit (794 aa).

The region spanning 40–158 (NSLNSELVLG…LKKYLGKDVK (119 aa)) is the tRNA-binding domain. In terms of domain architecture, B5 spans 402 to 477 (KNKTEFEIKI…RLYSYDNIQE (76 aa)). 4 residues coordinate Mg(2+): aspartate 455, aspartate 461, glutamate 464, and glutamate 465. The FDX-ACB domain occupies 702–794 (SKFQSSSRDL…NVKKMKVVIR (93 aa)).

The protein belongs to the phenylalanyl-tRNA synthetase beta subunit family. Type 1 subfamily. In terms of assembly, tetramer of two alpha and two beta subunits. It depends on Mg(2+) as a cofactor.

The protein localises to the cytoplasm. It catalyses the reaction tRNA(Phe) + L-phenylalanine + ATP = L-phenylalanyl-tRNA(Phe) + AMP + diphosphate + H(+). The chain is Phenylalanine--tRNA ligase beta subunit from Mycoplasma capricolum subsp. capricolum (strain California kid / ATCC 27343 / NCTC 10154).